A 283-amino-acid chain; its full sequence is Putative S-adenosyl-L-methionine-dependent methyltransferase SAV_474/SAV474 (283 aa).

Residues D121 and 150–151 (DL) each bind S-adenosyl-L-methionine. The tract at residues 258–283 (AAYGRPISTPPQREERPGGLISAVRR) is disordered.

Belongs to the UPF0677 family.

Its function is as follows. Exhibits S-adenosyl-L-methionine-dependent methyltransferase activity. The chain is Putative S-adenosyl-L-methionine-dependent methyltransferase SAV_474/SAV474 from Streptomyces avermitilis (strain ATCC 31267 / DSM 46492 / JCM 5070 / NBRC 14893 / NCIMB 12804 / NRRL 8165 / MA-4680).